A 200-amino-acid chain; its full sequence is MFNIPAVAVSYLIGSLSFAVIVSKYYGMDDPRTYGSGNPGATNVLRSGKKKAAVLTLLGDAAKGLVAVLLARVLQEPLGLSDSAIAAVALAALVGHMWPVFFGFKGGKGVATALGVLLALSPATALVCALIWLVMAFGFKVSSLAALTATIAAPLAALFFMPHLSWIWATLLIALLVLFRHKSNISNLLKGKEGKIGEKR.

A run of 5 helical transmembrane segments spans residues 2–22, 51–71, 84–104, 114–134, and 159–179; these read FNIP…AVIV, KAAV…VLLA, AIAA…FFGF, LGVL…IWLV, and FFMP…LVLF.

The protein belongs to the PlsY family. Probably interacts with PlsX.

It is found in the cell inner membrane. It catalyses the reaction an acyl phosphate + sn-glycerol 3-phosphate = a 1-acyl-sn-glycero-3-phosphate + phosphate. The protein operates within lipid metabolism; phospholipid metabolism. In terms of biological role, catalyzes the transfer of an acyl group from acyl-phosphate (acyl-PO(4)) to glycerol-3-phosphate (G3P) to form lysophosphatidic acid (LPA). This enzyme utilizes acyl-phosphate as fatty acyl donor, but not acyl-CoA or acyl-ACP. The chain is Glycerol-3-phosphate acyltransferase from Neisseria meningitidis serogroup C / serotype 2a (strain ATCC 700532 / DSM 15464 / FAM18).